The following is a 185-amino-acid chain: Large ribosomal subunit protein uL5 (185 aa).

The protein belongs to the universal ribosomal protein uL5 family. Part of the 50S ribosomal subunit; part of the 5S rRNA/L5/L18/L25 subcomplex. Contacts the 5S rRNA and the P site tRNA. Forms a bridge to the 30S subunit in the 70S ribosome.

Its function is as follows. This is one of the proteins that bind and probably mediate the attachment of the 5S RNA into the large ribosomal subunit, where it forms part of the central protuberance. In the 70S ribosome it contacts protein S13 of the 30S subunit (bridge B1b), connecting the 2 subunits; this bridge is implicated in subunit movement. Contacts the P site tRNA; the 5S rRNA and some of its associated proteins might help stabilize positioning of ribosome-bound tRNAs. This is Large ribosomal subunit protein uL5 from Rhodopseudomonas palustris (strain BisA53).